Here is an 80-residue protein sequence, read N- to C-terminus: Type VII secretion system accessory factor EsaB (80 aa).

Belongs to the EsaB family.

Its subcellular location is the cytoplasm. Functionally, seems to regulate secreted factors that contribute to the establishment of persistent infections in the host. This Staphylococcus aureus (strain COL) protein is Type VII secretion system accessory factor EsaB.